The chain runs to 381 residues: Homoserine O-succinyltransferase (381 aa).

An AB hydrolase-1 domain is found at 45 to 360 (NAVLVCHALN…PHGHDAFLLD (316 aa)). Ser-151 acts as the Nucleophile in catalysis. Arg-221 is a binding site for substrate. Catalysis depends on residues Asp-321 and His-354. Asp-355 contributes to the substrate binding site.

It belongs to the AB hydrolase superfamily. MetX family. As to quaternary structure, homodimer.

The protein localises to the cytoplasm. It catalyses the reaction L-homoserine + succinyl-CoA = O-succinyl-L-homoserine + CoA. Its pathway is amino-acid biosynthesis; L-methionine biosynthesis via de novo pathway; O-succinyl-L-homoserine from L-homoserine: step 1/1. In terms of biological role, transfers a succinyl group from succinyl-CoA to L-homoserine, forming succinyl-L-homoserine. This chain is Homoserine O-succinyltransferase, found in Paraburkholderia xenovorans (strain LB400).